The sequence spans 151 residues: Large ribosomal subunit protein bL9 (151 aa).

Belongs to the bacterial ribosomal protein bL9 family.

In terms of biological role, binds to the 23S rRNA. The sequence is that of Large ribosomal subunit protein bL9 from Rhodococcus jostii (strain RHA1).